We begin with the raw amino-acid sequence, 396 residues long: Cytochrome P450 121 (396 aa).

Cys-345 is a binding site for heme.

This sequence belongs to the cytochrome P450 family. Requires heme as cofactor.

The protein localises to the cytoplasm. The sequence is that of Cytochrome P450 121 (cyp121) from Mycobacterium bovis (strain ATCC BAA-935 / AF2122/97).